The primary structure comprises 91 residues: Putative ribonuclease inhibitor YrdF (91 aa).

It belongs to the barstar family.

The protein localises to the cytoplasm. The polypeptide is Putative ribonuclease inhibitor YrdF (yrdF) (Bacillus subtilis (strain 168)).